The chain runs to 404 residues: MEPIPNDLILEIFSRLPAKSVIGFRTLSKHWASILRSPVFTELFLTRSSNRPRLLFAAERNGEWLFFSSPQPQNRYEKSSHLDYHTKFSGDVSRFICSYVSGLLCFPDLWLSKDASPVICNPTTGMYESLPDLMRYKNARGFLGFDPIGKQFKVLSEAYPFSDQREHHEILTLGTEELSWRSNIISCPAYDRSLSEGICINGVLYYLAQTLGVPSCVIICFDVRSEEFKYFDAGCFNDQLDDTSGLILVNYEGKLSGINWKYGQAGERRTVELRMWVLEDAEKHEWVKYVYTLPENEVLDSCDFSVAGVTTRGDIVLCMKYTCKPFYVFYFNPERNTLQSVEIQDFGANLEAVENCGRVYAFVNHVEDLRVNKGKQLKSSISQVKHLCSCCNKVSQPDYHYQKA.

An F-box domain is found at 1–47 (MEPIPNDLILEIFSRLPAKSVIGFRTLSKHWASILRSPVFTELFLTR).

In Arabidopsis thaliana (Mouse-ear cress), this protein is F-box protein At3g57590.